Here is a 274-residue protein sequence, read N- to C-terminus: Large ribosomal subunit protein uL2 (274 aa).

Residues 221-254 (RGTAMNPADHPHGGGEGRTFGKHPVSPWGLPTKG) are disordered.

Belongs to the universal ribosomal protein uL2 family. Part of the 50S ribosomal subunit. Forms a bridge to the 30S subunit in the 70S ribosome.

Its function is as follows. One of the primary rRNA binding proteins. Required for association of the 30S and 50S subunits to form the 70S ribosome, for tRNA binding and peptide bond formation. It has been suggested to have peptidyltransferase activity; this is somewhat controversial. Makes several contacts with the 16S rRNA in the 70S ribosome. The sequence is that of Large ribosomal subunit protein uL2 from Sulfurihydrogenibium sp. (strain YO3AOP1).